A 276-amino-acid chain; its full sequence is Glutathione S-transferase-like protein ustS (276 aa).

Positions 16–109 (STLPGTSKSW…HLDETYPDPP (94 aa)) constitute a GST N-terminal domain.

Belongs to the GST superfamily.

It functions in the pathway mycotoxin biosynthesis. In terms of biological role, glutathione S-transferase-like protein; part of the gene cluster that mediates the biosynthesis of the secondary metabolite ustiloxin B, an antimitotic tetrapeptide. First, ustA is processed by the subtilisin-like endoprotease Kex2 that is outside the ustiloxin B gene cluster, at the C-terminal side of Arg-Lys, after transfer to Golgi apparatus through the endoplasmic reticulum (ER). Cleavage by KEX2 generates 16 peptides YAIG-I to YAIG-XVI. To process the precursor peptide further, at least two peptidases are necessary to cleave the N-terminal and C-terminal sides of the Tyr-Ala-Ile-Gly core peptide which serves as backbone for the synthesis of ustiloxin B, through cyclization and modification of the tyrosine with a non-protein coding amino acid, norvaline. One of the two peptidases must be the serine peptidase ustP; and the other pepdidase is probably ustH. Macrocyclization of the core peptide derived from ustA requires the tyrosinase ustQ, as well as the homologous oxidases ustYa and ustYb, and leads to the production of the first cyclization product N-desmethylustiloxin F. For the formation of N-desmethylustiloxin F, three oxidation steps are required, hydroxylation at the benzylic position, hydroxylation at either the aromatic ring of Tyr or beta-position of Ile, and oxidative cyclization. UstQ may catalyze the oxidation of a phenol moiety, whereas the ustYa and ustYb are most likely responsible for the remaining two-step oxidations. N-desmethylustiloxin F is then methylated by ustM to yield ustiloxin F which in turn substrate of the cytochrome P450 monooxygenase ustC which catalyzes the formation of S-deoxyustiloxin H. The flavoprotein monooxygenases ustF1 and ustF2 then participate in the modification of the side chain of S-deoxyustiloxin H, leading to the synthesis of an oxime intermediate, via ustiloxin H. Finally, carboxylative dehydration performed by the cysteine desulfurase-like protein ustD yields ustiloxin B. In Aspergillus flavus (strain ATCC 200026 / FGSC A1120 / IAM 13836 / NRRL 3357 / JCM 12722 / SRRC 167), this protein is Glutathione S-transferase-like protein ustS.